Here is a 103-residue protein sequence, read N- to C-terminus: Large ribosomal subunit protein bL21 (103 aa).

This sequence belongs to the bacterial ribosomal protein bL21 family. As to quaternary structure, part of the 50S ribosomal subunit. Contacts protein L20.

In terms of biological role, this protein binds to 23S rRNA in the presence of protein L20. The polypeptide is Large ribosomal subunit protein bL21 (Acinetobacter baumannii (strain AB307-0294)).